Consider the following 502-residue polypeptide: Beta-amyrin 28-monooxygenase CYP716A379 (502 aa).

A helical; Signal-anchor for type II membrane protein transmembrane segment spans residues 3–23; it reads LITLLSALLVLAIVSLSTFFV. Residues Asn88 and Asn181 are each glycosylated (N-linked (GlcNAc...) asparagine). Cys444 contributes to the heme binding site.

Belongs to the cytochrome P450 family. Heme serves as cofactor. Mainly expressed in flowers and flower buds, to a lesser extent in young leaves and, at low levels, in old leaves, stems and roots.

It is found in the membrane. The enzyme catalyses beta-amyrin + 3 reduced [NADPH--hemoprotein reductase] + 3 O2 = oleanolate + 3 oxidized [NADPH--hemoprotein reductase] + 4 H2O + 4 H(+). Its pathway is secondary metabolite biosynthesis; terpenoid biosynthesis. Functionally, component of the oleanane-type triterpene saponins (e.g. saponarioside A and saponarioside B) biosynthetic pathway, leading to the production of natural products with detergent properties used as traditional sources of soap. An oxidoreductase that facilitates the oxidation of the methyl group to a carboxyl group at the C-28 position of beta-amyrin, resulting in the formation of oleanolic acid. Catalyzes also the subsequent oxidation of the methyl group to a&lt; carboxyl group at the C-16 alpha position of oleanolic acid, resulting in the formation of echinocystic acid. In Saponaria officinalis (Common soapwort), this protein is Beta-amyrin 28-monooxygenase CYP716A379.